We begin with the raw amino-acid sequence, 285 residues long: Bifunctional protein FolD (285 aa).

NADP(+) is bound by residues 165–167 (GRS) and serine 190.

It belongs to the tetrahydrofolate dehydrogenase/cyclohydrolase family. Homodimer.

The catalysed reaction is (6R)-5,10-methylene-5,6,7,8-tetrahydrofolate + NADP(+) = (6R)-5,10-methenyltetrahydrofolate + NADPH. It catalyses the reaction (6R)-5,10-methenyltetrahydrofolate + H2O = (6R)-10-formyltetrahydrofolate + H(+). The protein operates within one-carbon metabolism; tetrahydrofolate interconversion. In terms of biological role, catalyzes the oxidation of 5,10-methylenetetrahydrofolate to 5,10-methenyltetrahydrofolate and then the hydrolysis of 5,10-methenyltetrahydrofolate to 10-formyltetrahydrofolate. The chain is Bifunctional protein FolD from Burkholderia multivorans (strain ATCC 17616 / 249).